The sequence spans 910 residues: MVEAIVSFGVEKLWDRLTQEYEQFQGVEDRIAELKSNLNLLKSFLKDAEAKKNTSQMVRHCVEEIKEIVYDTENMIETFILKEAARKRSGIIRRITKLTCIKVHRWEFASDIGGISKRISKVIQDMHSFGVQQMISDGSQSSHLLQEREREMRQTFSRGYESDFVGLEVNVKKLVGYLVEEDDIQIVSVTGMGGLGKTTLARQVFNHEDVKHQFDRLAWVCVSQEFTRKNVWQMILQNLTSRETKDEILQMEEAELHDELFQLLETSKSLIVFDDIWKEEDWGLINPIFPPKKGWKVLITSRTETIAMHGNRRYVNFKPECLTILESWILFQRIAMPRVDESEFKVDKEMEMMGKQMIKYCGGLPLAVKVLGGLLAAKYTFHDWKRLSENIGCHIVGRTDFSDGNNSSVYHVLSLSFEELPSYLKHCFLYLAHFPEDHNIKVEKLSYCWAAEGILEPRHYHGQTIRDVGESYIEELVRRNMVIAERDVTTLRFEACHLHDMMREVCLLKAKEENFVQIASILPPTANSQYPGTSRRFVSQNPTTLHVSRDINNPKLQSLLIVWENRRKSWKLLGSSFIRLELLRVLDLYKAKFEGRNLPSGIGKLIHLRYLNLDLARVSRLPSSLGNLRLLIYLDINVCTKSLFVPNCLMGMHELRYLRLPFNTSKEIKLGLCNLVNLETLENFSTENSSLEDLRGMVSLRTLTIGLFKHISKETLFASILGMRHLENLSIRTPDGSSKFKRIMEDGIVLDAIHLKQLNLRLYMPKLPDEQHFPSHLTSISLDGCCLVEDPLPILEKLLELKEVRLDFRAFCGKRMVSSDGGFPQLHRLYIWGLAEWEEWIVEEGSMPRLHTLTIWNCQKLKQLPDGLRFIYSIKDLDMDKKWKEILSEGGEEYYKVQHIPSVKFEKDYK.

The stretch at 15–57 (DRLTQEYEQFQGVEDRIAELKSNLNLLKSFLKDAEAKKNTSQM) forms a coiled coil. In terms of domain architecture, NB-ARC spans 148–460 (REREMRQTFS…AEGILEPRHY (313 aa)). 191 to 198 (GMGGLGKT) is a binding site for ATP. LRR repeat units lie at residues 580-604 (LELL…GIGK) and 605-628 (LIHL…LGNL).

Belongs to the disease resistance NB-LRR family.

Its function is as follows. Potential disease resistance protein. This Arabidopsis thaliana (Mouse-ear cress) protein is Putative disease resistance protein At1g58400.